Here is a 284-residue protein sequence, read N- to C-terminus: uncharacterized protein (284 aa).

The helical transmembrane segment at 9–28 (IILRWVVTLYIYGFILYQIT) threads the bilayer.

It localises to the membrane. This is an uncharacterized protein from Aquifex aeolicus (strain VF5).